The sequence spans 320 residues: Cell-cell adhesion glycoprotein 64 (320 aa).

An N-terminal signal peptide occupies residues 1 to 19 (MNKFITLFVLLASVSVAMS). 9 cysteine pairs are disulfide-bonded: Cys39–Cys57, Cys67–Cys79, Cys73–Cys86, Cys98–Cys110, Cys104–Cys115, Cys123–Cys138, Cys132–Cys147, Cys157–Cys171, and Cys165–Cys176. Residue Asn49 is glycosylated (N-linked (GlcNAc...) asparagine). Asn80 is a glycosylation site (N-linked (GlcNAc...) asparagine). N-linked (GlcNAc...) asparagine glycans are attached at residues Asn141 and Asn158. Asn187 is a glycosylation site (N-linked (GlcNAc...) asparagine). Disulfide bonds link Cys188–Cys202 and Cys194–Cys207. Residue Asn216 is glycosylated (N-linked (GlcNAc...) asparagine). Cystine bridges form between Cys226-Cys246, Cys232-Cys234, Cys266-Cys285, and Cys270-Cys281. Ser298 carries GPI-like-anchor amidated serine lipidation. Residues 299-320 (SATTIAFNAFVVFAIVLSVLLF) constitute a propeptide, removed in mature form.

Contains 18 disulfide bonds. In terms of processing, the GPI-like-anchor contains a phosphoceramide group, rather than a phosphatidyl group.

It is found in the cell membrane. Its function is as follows. Cell-cell adhesion during development. In Heterostelium pallidum (Cellular slime mold), this protein is Cell-cell adhesion glycoprotein 64.